We begin with the raw amino-acid sequence, 326 residues long: Malate dehydrogenase (326 aa).

11–17 contributes to the NAD(+) binding site; the sequence is GAAGQIG. 2 residues coordinate substrate: Arg92 and Arg98. Residues Asn105, Gln112, and 129 to 131 contribute to the NAD(+) site; that span reads VGN. The substrate site is built by Asn131 and Arg162. His187 functions as the Proton acceptor in the catalytic mechanism.

The protein belongs to the LDH/MDH superfamily. MDH type 2 family.

The catalysed reaction is (S)-malate + NAD(+) = oxaloacetate + NADH + H(+). Functionally, catalyzes the reversible oxidation of malate to oxaloacetate. In Leptospira borgpetersenii serovar Hardjo-bovis (strain JB197), this protein is Malate dehydrogenase.